Consider the following 72-residue polypeptide: Protein RALF-like 36 (72 aa).

Residues M1–A27 form the signal peptide. 2 cysteine pairs are disulfide-bonded: C43–C51 and C63–C69.

The protein belongs to the plant rapid alkalinization factor (RALF) family.

Its subcellular location is the secreted. Its function is as follows. Cell signaling peptide that may regulate plant stress, growth, and development. Mediates a rapid alkalinization of extracellular space by mediating a transient increase in the cytoplasmic Ca(2+) concentration leading to a calcium-dependent signaling events through a cell surface receptor and a concomitant activation of some intracellular mitogen-activated protein kinases. The protein is Protein RALF-like 36 of Arabidopsis thaliana (Mouse-ear cress).